The primary structure comprises 70 residues: Cold shock-like protein CspG (70 aa).

Residues 7–67 (GLVKWFNEEK…GQKGLQAANV (61 aa)) form the CSD domain.

The protein resides in the cytoplasm. In Shewanella violacea (strain JCM 10179 / CIP 106290 / LMG 19151 / DSS12), this protein is Cold shock-like protein CspG (cspG).